A 640-amino-acid polypeptide reads, in one-letter code: Scarecrow-like protein 27 (640 aa).

Low complexity-rich tracts occupy residues 68-79 (SYSSTTTTLSSS) and 86-98 (TVTNTTVTAGDDN). The interval 68-98 (SYSSTTTTLSSSHGGGGTTVTNTTVTAGDDN) is disordered. Residues 259–639 (GMAGDDQSVI…KELVTVSAWK (381 aa)) form the GRAS domain. The segment at 266 to 331 (SVIIEQLFNA…AEALLSLIHN (66 aa)) is leucine repeat I (LRI). Residues 350 to 422 (YRSFSETSPF…NRASSLKLTV (73 aa)) are VHIID. The short motif at 383–387 (IHIID) is the VHIID element. The segment at 438–470 (FTEENLKTFAGEVKIPFEIELLSVELLLNPAYW) is leucine repeat II (LRII). The segment at 480 to 565 (EAIAVNLPVN…RFWVQPSIEK (86 aa)) is PFYRE. An SAW region spans residues 568-639 (MKRHRWIERS…KELVTVSAWK (72 aa)).

This sequence belongs to the GRAS family. Expressed in seedlings, roots, cotyledons, leaves and flowers.

The protein resides in the nucleus. Functionally, probable transcription factor involved in plant development. This chain is Scarecrow-like protein 27 (SCL27), found in Arabidopsis thaliana (Mouse-ear cress).